Here is a 513-residue protein sequence, read N- to C-terminus: Zinc finger CCCH-type with G patch domain-containing protein (513 aa).

Residue M1 is modified to N-acetylmethionine. Residues 90-131 (EVPVAPGAELETVPSRETGPGPTERGQEEDDGEDEEGGAALS) are disordered. Acidic residues predominate over residues 116–126 (QEEDDGEDEEG). A C3H1-type zinc finger spans residues 176-202 (KSLKPCSFFLEGKCRFQENCRFSHGQV). A disordered region spans residues 267–296 (LPPLRTEPAGSSDSDGSDADDPSYARVVEP). 2 positions are modified to phosphoserine: S278 and S355. Residues 315 to 361 (TRGIGSRLLAKMGYEFGKGLGRHAEGRVEPVHAVVLPRGKSLDQCAE) enclose the G-patch domain. Disordered regions lie at residues 367–394 (TRAG…PPPR) and 492–513 (AQEA…MTEF). Residues 497 to 513 (LQREQRKADTHKKMTEF) are compositionally biased toward basic and acidic residues.

Interacts with CHD4/Mi-2; the interaction is direct.

Its subcellular location is the nucleus. Its function is as follows. Transcription repressor that specifically binds the 5'-GGAG[GA]A[GA]A-3' consensus sequence. Represses transcription by recruiting the chromatin multiprotein complex NuRD to target promoters. Negatively regulates expression of EGFR, a gene involved in cell proliferation, survival and migration. Its ability to repress genes of the EGFR pathway suggest it may act as a tumor suppressor. The chain is Zinc finger CCCH-type with G patch domain-containing protein (ZGPAT) from Bos taurus (Bovine).